The primary structure comprises 391 residues: Formate-dependent phosphoribosylglycinamide formyltransferase (391 aa).

Residues 20–21 (EL) and Glu80 contribute to the N(1)-(5-phospho-beta-D-ribosyl)glycinamide site. Residues Arg112, Lys153, 158 to 163 (SSGKGQ), 193 to 196 (EGFV), and Glu201 each bind ATP. An ATP-grasp domain is found at 117-306 (RLAAEELGLP…EFALHVRAFT (190 aa)). Mg(2+)-binding residues include Glu265 and Glu277. N(1)-(5-phospho-beta-D-ribosyl)glycinamide contacts are provided by residues Asp284, Lys354, and 361-362 (RR).

The protein belongs to the PurK/PurT family. As to quaternary structure, homodimer.

The catalysed reaction is N(1)-(5-phospho-beta-D-ribosyl)glycinamide + formate + ATP = N(2)-formyl-N(1)-(5-phospho-beta-D-ribosyl)glycinamide + ADP + phosphate + H(+). It functions in the pathway purine metabolism; IMP biosynthesis via de novo pathway; N(2)-formyl-N(1)-(5-phospho-D-ribosyl)glycinamide from N(1)-(5-phospho-D-ribosyl)glycinamide (formate route): step 1/1. Functionally, involved in the de novo purine biosynthesis. Catalyzes the transfer of formate to 5-phospho-ribosyl-glycinamide (GAR), producing 5-phospho-ribosyl-N-formylglycinamide (FGAR). Formate is provided by PurU via hydrolysis of 10-formyl-tetrahydrofolate. This Vibrio cholerae serotype O1 (strain ATCC 39315 / El Tor Inaba N16961) protein is Formate-dependent phosphoribosylglycinamide formyltransferase.